Here is a 108-residue protein sequence, read N- to C-terminus: Tyrosine-protein phosphatase 5 (108 aa).

Residues 1-108 enclose the Tyrosine-protein phosphatase domain; the sequence is QESTVIVMLT…QGNNPSPIIV (108 aa). Aspartate 78 is a substrate binding site.

It belongs to the protein-tyrosine phosphatase family.

It carries out the reaction O-phospho-L-tyrosyl-[protein] + H2O = L-tyrosyl-[protein] + phosphate. This is Tyrosine-protein phosphatase 5 (STY-5) from Styela plicata (Wrinkled sea squirt).